A 348-amino-acid polypeptide reads, in one-letter code: Anthranilate phosphoribosyltransferase (348 aa).

5-phospho-alpha-D-ribose 1-diphosphate-binding positions include Gly81, 84–85, 91–94, 109–117, and Ser121; these read GD, NVST, and KHGNRAVSG. Residue Gly81 participates in anthranilate binding. Ser93 contacts Mg(2+). Residue Asn112 coordinates anthranilate. Residue Arg167 coordinates anthranilate. Mg(2+)-binding residues include Asp226 and Glu227.

It belongs to the anthranilate phosphoribosyltransferase family. In terms of assembly, homodimer. Mg(2+) is required as a cofactor.

It carries out the reaction N-(5-phospho-beta-D-ribosyl)anthranilate + diphosphate = 5-phospho-alpha-D-ribose 1-diphosphate + anthranilate. Its pathway is amino-acid biosynthesis; L-tryptophan biosynthesis; L-tryptophan from chorismate: step 2/5. Catalyzes the transfer of the phosphoribosyl group of 5-phosphorylribose-1-pyrophosphate (PRPP) to anthranilate to yield N-(5'-phosphoribosyl)-anthranilate (PRA). The protein is Anthranilate phosphoribosyltransferase of Ectopseudomonas mendocina (strain ymp) (Pseudomonas mendocina).